A 336-amino-acid polypeptide reads, in one-letter code: Anthranilate phosphoribosyltransferase (336 aa).

5-phospho-alpha-D-ribose 1-diphosphate is bound by residues Gly82, 85-86 (GD), Thr90, 92-95 (NVST), 110-118 (KHGNRSVSS), and Ser122. Gly82 serves as a coordination point for anthranilate. Position 94 (Ser94) interacts with Mg(2+). Asn113 serves as a coordination point for anthranilate. Arg168 provides a ligand contact to anthranilate. Positions 227 and 228 each coordinate Mg(2+).

This sequence belongs to the anthranilate phosphoribosyltransferase family. Homodimer. Mg(2+) serves as cofactor.

The enzyme catalyses N-(5-phospho-beta-D-ribosyl)anthranilate + diphosphate = 5-phospho-alpha-D-ribose 1-diphosphate + anthranilate. Its pathway is amino-acid biosynthesis; L-tryptophan biosynthesis; L-tryptophan from chorismate: step 2/5. Catalyzes the transfer of the phosphoribosyl group of 5-phosphorylribose-1-pyrophosphate (PRPP) to anthranilate to yield N-(5'-phosphoribosyl)-anthranilate (PRA). The protein is Anthranilate phosphoribosyltransferase of Leptospira borgpetersenii serovar Hardjo-bovis (strain JB197).